The following is a 451-amino-acid chain: POU domain, class 3, transcription factor 1 (451 aa).

Disordered regions lie at residues 1–21, 69–114, 134–154, 186–253, and 395–451; these read MATTAQYLPRGPGGGAGGTGP, AHPQ…GFHA, AHHLGPAMSPSPGAGGGHQPQ, GLHH…PSSD, and KRMT…GSVQ. Gly residues-rich tracts occupy residues 11 to 20, 76 to 85, and 95 to 112; these read GPGGGAGGTG, TGGGGGGDWA, and AGGGSTGRADDGGGGGGF. The span at 134-145 shows a compositional bias: low complexity; the sequence is AHHLGPAMSPSP. Over residues 190 to 199 the composition is skewed to basic and acidic residues; that stretch reads ALHEDGHEAQ. Residues 220-232 are compositionally biased toward low complexity; it reads AGGLHAAAAHLHP. In terms of domain architecture, POU-specific spans 247-321; sequence EDAPSSDDLE…LLNKWLEETD (75 aa). A DNA-binding region (homeobox) is located at residues 339 to 398; that stretch reads KRKKRTSIEVGVKGALESHFLKCPKPSAHEITGLADSLQLEKEVVRVWFCNRRQKEKRMT. Pro residues predominate over residues 427–436; that stretch reads PSAPPPPPPA.

Belongs to the POU transcription factor family. Class-3 subfamily. As to expression, neural tissues and testis.

It localises to the nucleus. Transcription factor that binds to the octamer motif (5'-ATTTGCAT-3'). Acts as a transcriptional activator when binding cooperatively with SOX4, SOX11, or SOX12 to gene promoters. Acts as a transcriptional repressor of myelin-specific genes. The chain is POU domain, class 3, transcription factor 1 (Pou3f1) from Rattus norvegicus (Rat).